A 431-amino-acid chain; its full sequence is Protein S-Myc (431 aa).

Tyr-36 is modified (phosphotyrosine; by Tyr-kinases). One can recognise a bHLH domain in the interval 348–400 (ERRRNHNRMERQRRDIMRSSFLNLRDLVPELVHNEKAAKVVILKKATEYIHTL). Positions 400–421 (LQADESKLLVERKKLYERQQQL) are leucine-zipper.

In terms of assembly, efficient DNA binding requires dimerization with another bHLH protein.

Its subcellular location is the nucleus. Functionally, has apoptosis-inducing activity. The chain is Protein S-Myc (Mycs) from Mus musculus (Mouse).